Here is a 352-residue protein sequence, read N- to C-terminus: MKKINKIVLAVGGTGGHIIPALAARETFIHEDIEVLLLGKGLAHFLGDDSEIAYCDIPSGSPFSLRVNRMFSGAKQLYKGYVAALQKIRDFTPDLAIGFGSYHSLPAMLASIRSRIPLFLHEQNIVPGKVNKLFSRFAKGVGMSFAAAGEHFHCRAEEVFLPIRKLSEQIVFPGASPVICVVGGSQGAKILNDVVPKALARIRESYSNLYVHHIVGPKGDLQAVSQVYQDAGINHTVTAFDHNMLGVLQASDLVISRSGATMLNELLWVQVPAILIPYPGAYGHQEVNAKFFTHTVGGGTMILQKYLTEESLSKQVLLALDPATSENRRKAMLSAQQKKSFKSLYQFICESL.

Residues 14-16 (TGG), N124, R164, S185, and Q285 contribute to the UDP-N-acetyl-alpha-D-glucosamine site.

It belongs to the glycosyltransferase 28 family. MurG subfamily.

The protein resides in the cell inner membrane. It carries out the reaction di-trans,octa-cis-undecaprenyl diphospho-N-acetyl-alpha-D-muramoyl-L-alanyl-D-glutamyl-meso-2,6-diaminopimeloyl-D-alanyl-D-alanine + UDP-N-acetyl-alpha-D-glucosamine = di-trans,octa-cis-undecaprenyl diphospho-[N-acetyl-alpha-D-glucosaminyl-(1-&gt;4)]-N-acetyl-alpha-D-muramoyl-L-alanyl-D-glutamyl-meso-2,6-diaminopimeloyl-D-alanyl-D-alanine + UDP + H(+). It participates in cell wall biogenesis; peptidoglycan biosynthesis. In terms of biological role, cell wall formation. Catalyzes the transfer of a GlcNAc subunit on undecaprenyl-pyrophosphoryl-MurNAc-pentapeptide (lipid intermediate I) to form undecaprenyl-pyrophosphoryl-MurNAc-(pentapeptide)GlcNAc (lipid intermediate II). The chain is UDP-N-acetylglucosamine--N-acetylmuramyl-(pentapeptide) pyrophosphoryl-undecaprenol N-acetylglucosamine transferase from Chlamydia trachomatis serovar L2 (strain ATCC VR-902B / DSM 19102 / 434/Bu).